Consider the following 216-residue polypeptide: UPF0502 protein VC0395_0676/VC395_A0574 (216 aa).

It belongs to the UPF0502 family.

This is UPF0502 protein VC0395_0676/VC395_A0574 from Vibrio cholerae serotype O1 (strain ATCC 39541 / Classical Ogawa 395 / O395).